The chain runs to 138 residues: MRALWIVAVLLVGVEGSLVEFETLMMKIAGRSGISYYSSYGCYCGAGGQGWPQDASDRCCFEHDCCYAKLTGCDPTTDVYTYRQEDGEIVCGEDDPCGTQICECDKAAAICFRNSMDTYDYKYLQFSPENCQGESQPC.

Residues 1–37 form the signal peptide; sequence MRALWIVAVLLVGVEGSLVEFETLMMKIAGRSGISYY. Intrachain disulfides connect Cys42–Cys131, Cys44–Cys60, Cys59–Cys111, Cys65–Cys138, Cys66–Cys104, Cys73–Cys97, Cys91–Cys102, and Cys131–Cys138. Positions 79-82 are excised as a propeptide; that stretch reads VYTY. Pyrrolidone carboxylic acid is present on Gln84. Residues 119–124 constitute a propeptide that is removed on maturation; it reads YDYKYL. Gln125 carries the post-translational modification Pyrrolidone carboxylic acid.

Belongs to the phospholipase A2 family. Group II subfamily. D49 sub-subfamily. Heterodimer of one of the acidic (CA1, CA2, CA3 or CA4) and one of the basic (CBa1, CBa2, CBb, CBc or CBd) subunits; non-covalently linked. The acidic subunit is non-toxic, without enzymatic activity and comprises 3 peptides that are cross-linked by 5 disulfide bridges. The basic subunit is toxic, has phospholipase A2 activity and is composed of a single chain. Multiple variants of each subunit give different crotoxin complexes that can be subdivided into 2 classes: (1) those of high toxicity, low PLA2 activity (CBb, CBc and CBd linked with high affinity to any CA) and high stability (K(d)=4.5 nM) and (2) those of moderate toxicity, high PLA2 activity (CBa2 linked with low affinity to any CA) and low stability (K(d)=25 nM). Expressed by the venom gland.

The protein resides in the secreted. In terms of biological role, CAalpha-CAbeta-CAgamma: The acidic subunit of crotoxin (CA) is a heterotrimer of three disulfide-linked chains generated by post-translational maturation of a PLA2-like precursor. CA has no PLA2 activity and is not neurotoxic by itself, but plays several important functions in the crotoxin complex by increasing the lethal potency of the uncomplexed CB subunit. It acts by physically occluding the hydrophobic interfacial binding surface (IBS) of CB. This effect decreases the adsorption of CB to phospholipid membranes, targeting the crotoxin complex to reach the specific presynaptic receptor (R48) at the neuromuscular junction. It also prevents the formation of the reactive CB dimer. Moreover, the CA subunit inhibits the catalytic activity by partially masking the catalytic site of CB and inhibits its anticoagulant activity. Functionally, heterodimer CA-CB: Crotoxin is a potent presynaptic neurotoxin that possesses phospholipase A2 (PLA2) activity and exerts a lethal action by blocking neuromuscular transmission. It consists of a non-covalent association of a basic and weakly toxic PLA2 subunit (CBa2, CBb, CBc, or CBd), with a small acidic, non-enzymatic and non-toxic subunit (CA1, CA2, CA3 or CA4). The complex acts by binding to a specific 48-kDa protein (R48/CAPT) receptor located on presynaptic membranes, forming a transient ternary complex CA-CB-R48, followed by dissociation of the CA-CB complex and release of the CA subunit. At equilibrium, only the CB subunits remain associated with the specific crotoxin receptor. In addition to neurotoxicity, crotoxin has been found to exert myotoxicity, nephrotoxicity, and cardiovascular toxicity. Moreover, anti-inflammatory, immunomodulatory, anti-tumor and analgesic effects of crotoxin have also been reported. Its function is as follows. Found in the venom as a monomer and stabilized by one disulfide bond (Cys-131 and Cys-138). This peptide induces potent antinociceptive effects in acute and chronic pain models. This effect is mediated by the release of peripheral dynorphin A, an endogenous agonist of kappa-opioid receptors, and this release is dependent on cannabinoid receptor CB2 activation. This is Phospholipase A2 homolog crotoxin acid subunit CA from Crotalus durissus terrificus (South American rattlesnake).